The chain runs to 343 residues: Flap endonuclease 1 (343 aa).

Positions 1–98 (MGVPIGDLVP…KELEKRREAR (98 aa)) are N-domain. 7 residues coordinate Mg(2+): Asp27, Asp80, Glu152, Glu154, Asp173, Asp175, and Asp236. Residues 116–258 (EARKYAQRAT…KALEIVRYSR (143 aa)) are I-domain. Positions 330 to 338 (RQSTLESWF) are interaction with PCNA.

This sequence belongs to the XPG/RAD2 endonuclease family. FEN1 subfamily. In terms of assembly, interacts with PCNA. PCNA stimulates the nuclease activity without altering cleavage specificity. Mg(2+) serves as cofactor.

Structure-specific nuclease with 5'-flap endonuclease and 5'-3' exonuclease activities involved in DNA replication and repair. During DNA replication, cleaves the 5'-overhanging flap structure that is generated by displacement synthesis when DNA polymerase encounters the 5'-end of a downstream Okazaki fragment. Binds the unpaired 3'-DNA end and kinks the DNA to facilitate 5' cleavage specificity. Cleaves one nucleotide into the double-stranded DNA from the junction in flap DNA, leaving a nick for ligation. Also involved in the base excision repair (BER) pathway. Acts as a genome stabilization factor that prevents flaps from equilibrating into structures that lead to duplications and deletions. Also possesses 5'-3' exonuclease activity on nicked or gapped double-stranded DNA. This chain is Flap endonuclease 1, found in Pyrococcus horikoshii (strain ATCC 700860 / DSM 12428 / JCM 9974 / NBRC 100139 / OT-3).